The sequence spans 207 residues: Outer-membrane lipoprotein LolB (207 aa).

A signal peptide spans 1–21 (MPQPDFRLIRLLPLAALVLTA). Cysteine 22 carries the N-palmitoyl cysteine lipid modification. Cysteine 22 is lipidated: S-diacylglycerol cysteine.

It belongs to the LolB family. Monomer.

It localises to the cell outer membrane. Its function is as follows. Plays a critical role in the incorporation of lipoproteins in the outer membrane after they are released by the LolA protein. This chain is Outer-membrane lipoprotein LolB, found in Shigella sonnei (strain Ss046).